We begin with the raw amino-acid sequence, 82 residues long: Omega-conotoxin PnVIB (82 aa).

A signal peptide spans 1 to 22 (MKLTCMMIVAVLFLTAWTVVTA). The propeptide occupies 23–52 (EPHSSNVLENLYLKAHHEMENPEASKLNTR). Cystine bridges form between cysteine 56–cysteine 73, cysteine 63–cysteine 77, and cysteine 72–cysteine 81.

Expressed by the venom duct.

Its subcellular location is the secreted. Its function is as follows. Omega-conotoxins act at presynaptic membranes, they bind and block voltage-gated calcium channels (Cav). Acts on high voltage-activated (HVA) calcium currents in molluscan neurons. This Conus pennaceus (Feathered cone) protein is Omega-conotoxin PnVIB.